The sequence spans 88 residues: Elongation factor 1-beta (88 aa).

Belongs to the EF-1-beta/EF-1-delta family.

Promotes the exchange of GDP for GTP in EF-1-alpha/GDP, thus allowing the regeneration of EF-1-alpha/GTP that could then be used to form the ternary complex EF-1-alpha/GTP/AAtRNA. This chain is Elongation factor 1-beta, found in Haloarcula marismortui (strain ATCC 43049 / DSM 3752 / JCM 8966 / VKM B-1809) (Halobacterium marismortui).